Here is a 686-residue protein sequence, read N- to C-terminus: Probable metal-nicotianamine transporter YSL10 (686 aa).

14 helical membrane-spanning segments follow: residues V36–M56, L60–L80, C109–M129, L151–P171, M212–G232, L271–I291, V316–T336, I383–V403, V415–L435, G461–S481, F501–L521, G556–V576, M597–I617, and G639–V659.

The protein belongs to the YSL (TC 2.A.67.2) family.

It localises to the membrane. Functionally, may be involved in the transport of nicotianamine-chelated metals. This is Probable metal-nicotianamine transporter YSL10 (YSL10) from Oryza sativa subsp. japonica (Rice).